The chain runs to 234 residues: Gene 53 protein (234 aa).

This Mycobacterium phage L5 (Mycobacteriophage L5) protein is Gene 53 protein (53).